Here is a 227-residue protein sequence, read N- to C-terminus: Fibrillarin-like rRNA/tRNA 2'-O-methyltransferase (227 aa).

S-adenosyl-L-methionine-binding positions include 86-87, 105-106, 130-131, and 150-153; these read TT, EF, DA, and DVAQ.

Belongs to the methyltransferase superfamily. Fibrillarin family. In terms of assembly, interacts with nop5. Component of box C/D small ribonucleoprotein (sRNP) particles that contain rpl7ae, FlpA and nop5, plus a guide RNA.

In terms of biological role, involved in pre-rRNA and tRNA processing. Utilizes the methyl donor S-adenosyl-L-methionine to catalyze the site-specific 2'-hydroxyl methylation of ribose moieties in rRNA and tRNA. Site specificity is provided by a guide RNA that base pairs with the substrate. Methylation occurs at a characteristic distance from the sequence involved in base pairing with the guide RNA. The chain is Fibrillarin-like rRNA/tRNA 2'-O-methyltransferase from Pyrococcus abyssi (strain GE5 / Orsay).